A 364-amino-acid polypeptide reads, in one-letter code: Chorismate synthase (364 aa).

NADP(+) is bound at residue Arg48. FMN contacts are provided by residues 126–128 (RSS), Gly288, 303–307 (KPIAS), and Arg329.

It belongs to the chorismate synthase family. In terms of assembly, homotetramer. The cofactor is FMNH2.

The enzyme catalyses 5-O-(1-carboxyvinyl)-3-phosphoshikimate = chorismate + phosphate. Its pathway is metabolic intermediate biosynthesis; chorismate biosynthesis; chorismate from D-erythrose 4-phosphate and phosphoenolpyruvate: step 7/7. Its function is as follows. Catalyzes the anti-1,4-elimination of the C-3 phosphate and the C-6 proR hydrogen from 5-enolpyruvylshikimate-3-phosphate (EPSP) to yield chorismate, which is the branch point compound that serves as the starting substrate for the three terminal pathways of aromatic amino acid biosynthesis. This reaction introduces a second double bond into the aromatic ring system. The chain is Chorismate synthase from Desulfovibrio desulfuricans (strain ATCC 27774 / DSM 6949 / MB).